Reading from the N-terminus, the 491-residue chain is UDP-N-acetylmuramate--L-alanine ligase (491 aa).

Glycine 126 to threonine 132 is a binding site for ATP.

The protein belongs to the MurCDEF family.

It is found in the cytoplasm. The catalysed reaction is UDP-N-acetyl-alpha-D-muramate + L-alanine + ATP = UDP-N-acetyl-alpha-D-muramoyl-L-alanine + ADP + phosphate + H(+). Its pathway is cell wall biogenesis; peptidoglycan biosynthesis. In terms of biological role, cell wall formation. The protein is UDP-N-acetylmuramate--L-alanine ligase of Shigella boydii serotype 18 (strain CDC 3083-94 / BS512).